The sequence spans 167 residues: Ribosome maturation factor RimM (167 aa).

The PRC barrel domain occupies 92–166; it reads DGVYYYRELL…EVRVELMEGL (75 aa).

The protein belongs to the RimM family. In terms of assembly, binds ribosomal protein uS19.

The protein localises to the cytoplasm. Its function is as follows. An accessory protein needed during the final step in the assembly of 30S ribosomal subunit, possibly for assembly of the head region. Essential for efficient processing of 16S rRNA. May be needed both before and after RbfA during the maturation of 16S rRNA. It has affinity for free ribosomal 30S subunits but not for 70S ribosomes. The polypeptide is Ribosome maturation factor RimM (Lactobacillus delbrueckii subsp. bulgaricus (strain ATCC 11842 / DSM 20081 / BCRC 10696 / JCM 1002 / NBRC 13953 / NCIMB 11778 / NCTC 12712 / WDCM 00102 / Lb 14)).